Reading from the N-terminus, the 669-residue chain is Coagulation factor XIII B chain (669 aa).

The N-terminal stretch at 1–21 is a signal peptide; that stretch reads MMTLRHLPFILLLILSGELYA. 10 Sushi domains span residues 25–89, 90–149, 152–211, 212–270, 273–330, 335–392, 395–453, 454–517, 523–581, and 582–648; these read QCDF…PRCY, KKCL…SCRK, ETCL…QCNK, LMCS…ICEG, NRCP…KCIE, VACE…ECVE, ENCK…VCLE, PCTI…PMCI, GMCA…SCLE, and PCTL…PKCT. Disulfide bonds link Cys26/Cys77, Cys60/Cys88, Cys92/Cys136, Cys119/Cys147, Cys154/Cys198, Cys181/Cys209, Cys214/Cys256, Cys242/Cys268, Cys275/Cys317, Cys303/Cys328, Cys337/Cys379, Cys365/Cys390, Cys397/Cys440, Cys426/Cys451, Cys455/Cys506, Cys487/Cys516, Cys525/Cys568, Cys554/Cys579, Cys583/Cys637, and Cys617/Cys647. A glycan (N-linked (GlcNAc...) asparagine) is linked at Asn163. The N-linked (GlcNAc...) asparagine glycan is linked to Asn546.

As to quaternary structure, tetramer of two A chains (F13A1) and two B (F13B) chains. As to expression, predominantly expressed in liver and kidney.

The protein resides in the secreted. The B chain of factor XIII is not catalytically active, but is thought to stabilize the A subunits and regulate the rate of transglutaminase formation by thrombin. This is Coagulation factor XIII B chain (F13b) from Mus musculus (Mouse).